The primary structure comprises 475 residues: Ankyrin repeat, SAM and basic leucine zipper domain-containing protein 1 (475 aa).

The segment at 1-25 is disordered; it reads MAAGTLRGLAVAGGGESSDSEDDGW. Residues serine 17, serine 18, and serine 20 each carry the phosphoserine modification. 6 ANK repeats span residues 45–74, 78–107, 110–144, 148–177, 181–210, and 214–243; these read EKNETFKKALTTGDISLVKELLDSGINVDS, YGWTPLMYAASVANAELVRFLLDRGANASF, DKLTILISACSARGSEEQVLKCVELLLSRNADPNT, RLMTPIMYAARDGHTQVVALLVAHGAEVNA, NGYTALTWAARQGHKNVILKLLELGANKML, and DGRTPSEIAKRNKHLEIFNFLSLTLNPLEG. The 63-residue stretch at 272-334 folds into the SAM domain; sequence PYTAFGDLEI…KILAALKELE (63 aa).

In terms of assembly, interacts with DDX4, PIWIL1, RANBP9 and TDRD1. As to expression, expressed exclusively in testis and ovary with higher levels in testis.

The protein resides in the cytoplasm. Plays a central role during spermatogenesis by repressing transposable elements and preventing their mobilization, which is essential for the germline integrity. Acts via the piRNA metabolic process, which mediates the repression of transposable elements during meiosis by forming complexes composed of piRNAs and Piwi proteins and governs the methylation and subsequent repression of transposons. Its association with pi-bodies suggests a participation in the primary piRNAs metabolic process. Required prior to the pachytene stage to facilitate the production of multiple types of piRNAs, including those associated with repeats involved in regulation of retrotransposons. May act by mediating protein-protein interactions during germ cell maturation. The polypeptide is Ankyrin repeat, SAM and basic leucine zipper domain-containing protein 1 (Mus musculus (Mouse)).